A 334-amino-acid polypeptide reads, in one-letter code: MEKINAVITGVGGYVPDYVLTNEEISRMVDTNDEWIMTRIGVKERRILNEEGLGTSYMARKAAKQLMQKTASNPDDIDAVIVATTTPDYHFPSTASILCDKLGLKNAFAFDLQAACCGFLYLMETAASLIASGRHKKIIIVGADKMSSMVNYQDRATCPIFGDGAAACMVEATTEDYGIMDSILRTDGKGLPFLHMKAGGSVCPPSYFTVDHKMHYLYQEGRTVFKYAVSNMSDITATIAEKNGLNKDNIDWVIPHQANLRIIDAVASRLEVPLEKVMINIQRYGNTSGATLPLCLWDYEKQLKKGDNLIFTAFGAGFTYGAVYVKWGYDGSKR.

Active-site residues include C116 and H256. Positions 257–261 (QANLR) are ACP-binding. N286 is a catalytic residue.

Belongs to the thiolase-like superfamily. FabH family. As to quaternary structure, homodimer.

The protein localises to the cytoplasm. It catalyses the reaction malonyl-[ACP] + acetyl-CoA + H(+) = 3-oxobutanoyl-[ACP] + CO2 + CoA. The protein operates within lipid metabolism; fatty acid biosynthesis. Catalyzes the condensation reaction of fatty acid synthesis by the addition to an acyl acceptor of two carbons from malonyl-ACP. Catalyzes the first condensation reaction which initiates fatty acid synthesis and may therefore play a role in governing the total rate of fatty acid production. Possesses both acetoacetyl-ACP synthase and acetyl transacylase activities. Its substrate specificity determines the biosynthesis of branched-chain and/or straight-chain of fatty acids. The sequence is that of Beta-ketoacyl-[acyl-carrier-protein] synthase III from Phocaeicola vulgatus (strain ATCC 8482 / DSM 1447 / JCM 5826 / CCUG 4940 / NBRC 14291 / NCTC 11154) (Bacteroides vulgatus).